A 561-amino-acid chain; its full sequence is Liver carboxylesterase B-1 (561 aa).

The signal sequence occupies residues 1–18 (MCLRSLFLVSLATCVVCG). N-linked (GlcNAc...) asparagine glycosylation occurs at Asn-79. An intrachain disulfide couples Cys-87 to Cys-116. Catalysis depends on Ser-221, which acts as the Acyl-ester intermediate. A disulfide bridge connects residues Cys-273 and Cys-284. Residues Glu-353 and His-466 each act as charge relay system in the active site. The short motif at 558 to 561 (HNEL) is the Prevents secretion from ER element.

This sequence belongs to the type-B carboxylesterase/lipase family. In terms of assembly, monomer.

It is found in the endoplasmic reticulum lumen. The catalysed reaction is a carboxylic ester + H2O = an alcohol + a carboxylate + H(+). Its function is as follows. Involved in the detoxification of xenobiotics and in the activation of ester and amide prodrugs. In Rattus norvegicus (Rat), this protein is Liver carboxylesterase B-1.